The chain runs to 129 residues: Glycine cleavage system H protein (129 aa).

In terms of domain architecture, Lipoyl-binding spans 24–106; sequence SYTVGISEHA…FGDGWFFRVM (83 aa). K65 is subject to N6-lipoyllysine.

Belongs to the GcvH family. In terms of assembly, the glycine cleavage system is composed of four proteins: P, T, L and H. The cofactor is (R)-lipoate.

In terms of biological role, the glycine cleavage system catalyzes the degradation of glycine. The H protein shuttles the methylamine group of glycine from the P protein to the T protein. The sequence is that of Glycine cleavage system H protein from Shewanella sediminis (strain HAW-EB3).